A 116-amino-acid chain; its full sequence is Aspartate 1-decarboxylase (116 aa).

The Schiff-base intermediate with substrate; via pyruvic acid role is filled by S25. S25 is subject to Pyruvic acid (Ser). Position 57 (T57) interacts with substrate. Catalysis depends on Y58, which acts as the Proton donor. 73–75 (GAA) serves as a coordination point for substrate.

The protein belongs to the PanD family. As to quaternary structure, heterooctamer of four alpha and four beta subunits. The cofactor is pyruvate. In terms of processing, is synthesized initially as an inactive proenzyme, which is activated by self-cleavage at a specific serine bond to produce a beta-subunit with a hydroxyl group at its C-terminus and an alpha-subunit with a pyruvoyl group at its N-terminus.

The protein resides in the cytoplasm. The catalysed reaction is L-aspartate + H(+) = beta-alanine + CO2. The protein operates within cofactor biosynthesis; (R)-pantothenate biosynthesis; beta-alanine from L-aspartate: step 1/1. Its function is as follows. Catalyzes the pyruvoyl-dependent decarboxylation of aspartate to produce beta-alanine. The polypeptide is Aspartate 1-decarboxylase (Christiangramia forsetii (strain DSM 17595 / CGMCC 1.15422 / KT0803) (Gramella forsetii)).